We begin with the raw amino-acid sequence, 259 residues long: Global transcriptional regulator CodY (259 aa).

A GAF domain region spans residues 1–155 (MELLAKTRKL…SATVVGMEIL (155 aa)). A DNA-binding region (H-T-H motif) is located at residues 203-222 (ASKIADRVGITRSVIVNALR). Ser-215 bears the Phosphoserine mark.

It belongs to the CodY family.

It localises to the cytoplasm. Functionally, DNA-binding global transcriptional regulator which is involved in the adaptive response to starvation and acts by directly or indirectly controlling the expression of numerous genes in response to nutrient availability. During rapid exponential growth, CodY is highly active and represses genes whose products allow adaptation to nutrient depletion. This Bacillus cytotoxicus (strain DSM 22905 / CIP 110041 / 391-98 / NVH 391-98) protein is Global transcriptional regulator CodY.